Here is a 334-residue protein sequence, read N- to C-terminus: GTP 3',8-cyclase (334 aa).

Positions 13 to 239 (RFQRKFYYLR…KARADNDGPA (227 aa)) constitute a Radical SAM core domain. GTP is bound at residue R22. 2 residues coordinate [4Fe-4S] cluster: C29 and C33. Residue Y35 participates in S-adenosyl-L-methionine binding. Residue C36 coordinates [4Fe-4S] cluster. Residue R73 participates in GTP binding. G77 provides a ligand contact to S-adenosyl-L-methionine. A GTP-binding site is contributed by T104. S128 is a binding site for S-adenosyl-L-methionine. GTP is bound at residue K165. Residue M199 coordinates S-adenosyl-L-methionine. [4Fe-4S] cluster-binding residues include C262 and C265. Residue 267-269 (RLR) participates in GTP binding. C279 is a [4Fe-4S] cluster binding site.

The protein belongs to the radical SAM superfamily. MoaA family. Monomer and homodimer. It depends on [4Fe-4S] cluster as a cofactor.

It carries out the reaction GTP + AH2 + S-adenosyl-L-methionine = (8S)-3',8-cyclo-7,8-dihydroguanosine 5'-triphosphate + 5'-deoxyadenosine + L-methionine + A + H(+). Its pathway is cofactor biosynthesis; molybdopterin biosynthesis. In terms of biological role, catalyzes the cyclization of GTP to (8S)-3',8-cyclo-7,8-dihydroguanosine 5'-triphosphate. The protein is GTP 3',8-cyclase of Vibrio cholerae serotype O1 (strain M66-2).